Here is a 518-residue protein sequence, read N- to C-terminus: 2-isopropylmalate synthase (518 aa).

The region spanning 5-267 (VIIFDTTLRD…STNIKHKEIY (263 aa)) is the Pyruvate carboxyltransferase domain. Positions 14, 202, 204, and 238 each coordinate Mn(2+). Residues 392–518 (SLSFFSVQSI…KLKTLKKVNN (127 aa)) form a regulatory domain region.

It belongs to the alpha-IPM synthase/homocitrate synthase family. LeuA type 1 subfamily. Homodimer. It depends on Mn(2+) as a cofactor.

It is found in the cytoplasm. The catalysed reaction is 3-methyl-2-oxobutanoate + acetyl-CoA + H2O = (2S)-2-isopropylmalate + CoA + H(+). The protein operates within amino-acid biosynthesis; L-leucine biosynthesis; L-leucine from 3-methyl-2-oxobutanoate: step 1/4. In terms of biological role, catalyzes the condensation of the acetyl group of acetyl-CoA with 3-methyl-2-oxobutanoate (2-ketoisovalerate) to form 3-carboxy-3-hydroxy-4-methylpentanoate (2-isopropylmalate). The chain is 2-isopropylmalate synthase from Buchnera aphidicola subsp. Schizaphis graminum (strain Sg).